We begin with the raw amino-acid sequence, 1606 residues long: Fatty acid synthase apf5 (1606 aa).

The region spanning 142–218 (VPVSAILISL…ETLSTSHDGQ (77 aa)) is the Carrier domain. At Ser177 the chain carries O-(pantetheine 4'-phosphoryl)serine. The 544-residue stretch at 996-1539 (KESLIEVALQ…QKGGQALLVH (544 aa)) folds into the Ketosynthase family 3 (KS3) domain. Active-site for beta-ketoacyl synthase activity residues include Cys1182, His1424, and His1465.

This sequence belongs to the thiolase-like superfamily. Fungal fatty acid synthetase subunit alpha family.

The enzyme catalyses a fatty acyl-[ACP] + malonyl-[ACP] + H(+) = a 3-oxoacyl-[ACP] + holo-[ACP] + CO2. Its pathway is secondary metabolite biosynthesis. Functionally, fatty acid synthase; part of the gene cluster that mediates the biosynthesis of the cyclic tetrapeptide apicidin F (APF). The non-ribosomal peptide synthetase apf1 incorporates four different amino acids to produce apicidin F: L-phenylalanine, D-pipecolic acid (D-pip), N-methoxy-L-tryptophan and L-2-aminooctanedioic acid. L-Phenylalanine is the only proteinogenic amino acid directly used by apf1. The 3 other apf1 substrates are non-proteinogenic and have to be modified by other enzymes of the cluster. Lysine is converted to delta-1-pyrroline-5-carboxylate (P5C) which is reduced to L-pipecolic acid (L-pip) by apf3. L-pip is epimerized to D-pip, probably by apf1 activity, prior to incorporation. L-Tryptophan is N-oxidyzed by one of the cytochrome P450 monooxygenases (apf7 or apf8), and further methylated at the hydroxy group by the O-methyltransferase apf6 to yield N-methoxy-L-tryptophan. The synthesis of the fourth apf1 substrate is more complex. The fatty acid synthase apf5 is involved in the synthesis of the octanoic acid backbone of L-2-aminooctanedioic acid by fixing one acetyl-CoA unit and three malonyl-CoA units. Then one of the cytochrome P450 monooxygenases (apf7 or apf8) may oxidize this backbone to 2-oxooctanoic acid. The aminotransferase apf4 is predicted to catalyze the exchange of the keto group with an amino group. The next step would be the oxidation of 2-aminooctanoic acid by one of the cytochrome P450 monooxygenases (apf7 or apf8). The last step is the oxidation of 2-amino-8-hydroxyoctanoic acid to 2-aminooctanedioic acid is catalyzed by the FAD-dependent monooxygenase apf9. In Gibberella fujikuroi (strain CBS 195.34 / IMI 58289 / NRRL A-6831) (Bakanae and foot rot disease fungus), this protein is Fatty acid synthase apf5.